We begin with the raw amino-acid sequence, 546 residues long: Cryptochrome DASH, chloroplastic/mitochondrial (546 aa).

Residues 4 to 151 (TRVVIWFRND…TMERHWGSTL (148 aa)) form the Photolyase/cryptochrome alpha/beta domain. Positions 497–546 (PRRDFTEMGSPPGPRRGGGGGGRGRGRPGGSTPNRGTKARVASVYDTVYG) are disordered. Gly residues predominate over residues 511 to 525 (RRGGGGGGRGRGRPG).

Belongs to the DNA photolyase class-1 family. FAD serves as cofactor. The cofactor is (6R)-5,10-methylene-5,6,7,8-tetrahydrofolate.

It is found in the plastid. The protein resides in the chloroplast. The protein localises to the mitochondrion. In terms of biological role, may have a photoreceptor function. Binds ss- and ds-DNA in a sequence non-specific manner, lacks photolyase activity. This chain is Cryptochrome DASH, chloroplastic/mitochondrial, found in Ostreococcus tauri.